The sequence spans 426 residues: MIDVKLIRENIELVEENLRKRRSKVSLDKLKALEHERLDLLKEVEQDRAKKNESSKKIGEYMKAGNKEEAEKIKEEMKNFTESLNKKEEKLSQLEEAVNNEILYLPNMLSEDVPDGDDEKANKEIIRWGEPRKFDFEVKDHVDIAMGLDILDIERAVRMSRTRFSLMKGKGAALERALINFMLKKHTSEHGYTEYVPPILVNGRTMTGTGQLPKFEEDLFKTTDDPALYLIPTAEVPLTNIYREEIIPENMLPLYCTAYTPCFRSEAGSYGRDMRGLIRQHQFDKVELVKICAADKSKEEHEKMLKDAESILQALELPYRVVVLSSGDIGNAAYKTFDIEVWLPSQNMYREISSVSNCWDYQARRMQMRTRRNGKTELVHTLNGSGIAVGRTWIAILENYQQADGSVIIPDALRPFTGFDKIEKPN.

233-235 (TAE) lines the L-serine pocket. 264–266 (RSE) lines the ATP pocket. Glu-287 contributes to the L-serine binding site. 351-354 (EISS) provides a ligand contact to ATP. Ser-385 is an L-serine binding site.

Belongs to the class-II aminoacyl-tRNA synthetase family. Type-1 seryl-tRNA synthetase subfamily. In terms of assembly, homodimer. The tRNA molecule binds across the dimer.

Its subcellular location is the cytoplasm. It catalyses the reaction tRNA(Ser) + L-serine + ATP = L-seryl-tRNA(Ser) + AMP + diphosphate + H(+). The enzyme catalyses tRNA(Sec) + L-serine + ATP = L-seryl-tRNA(Sec) + AMP + diphosphate + H(+). It participates in aminoacyl-tRNA biosynthesis; selenocysteinyl-tRNA(Sec) biosynthesis; L-seryl-tRNA(Sec) from L-serine and tRNA(Sec): step 1/1. Its function is as follows. Catalyzes the attachment of serine to tRNA(Ser). Is also able to aminoacylate tRNA(Sec) with serine, to form the misacylated tRNA L-seryl-tRNA(Sec), which will be further converted into selenocysteinyl-tRNA(Sec). In Brachyspira hyodysenteriae (strain ATCC 49526 / WA1), this protein is Serine--tRNA ligase.